Consider the following 443-residue polypeptide: Trigger factor (443 aa).

One can recognise a PPIase FKBP-type domain in the interval 169 to 254 (GDIAFLDFSG…LNSIKEVQLP (86 aa)).

The protein belongs to the FKBP-type PPIase family. Tig subfamily.

The protein resides in the cytoplasm. The catalysed reaction is [protein]-peptidylproline (omega=180) = [protein]-peptidylproline (omega=0). Involved in protein export. Acts as a chaperone by maintaining the newly synthesized protein in an open conformation. Functions as a peptidyl-prolyl cis-trans isomerase. The chain is Trigger factor from Mycoplasmoides gallisepticum (strain R(low / passage 15 / clone 2)) (Mycoplasma gallisepticum).